Consider the following 67-residue polypeptide: Large ribosomal subunit protein eL24 (67 aa).

Zn(2+) contacts are provided by Cys-7, Cys-10, Cys-33, and Cys-37. The C4-type zinc-finger motif lies at 7–37; that stretch reads CSYCGKPFEPGTGKMFVRNDGRVLFFCSRKC.

It belongs to the eukaryotic ribosomal protein eL24 family. Part of the 50S ribosomal subunit. Forms a cluster with proteins L3 and L14. Requires Zn(2+) as cofactor.

In terms of biological role, binds to the 23S rRNA. In Pyrococcus abyssi (strain GE5 / Orsay), this protein is Large ribosomal subunit protein eL24.